The primary structure comprises 428 residues: Histidine--tRNA ligase (428 aa).

It belongs to the class-II aminoacyl-tRNA synthetase family. Homodimer.

The protein localises to the cytoplasm. It carries out the reaction tRNA(His) + L-histidine + ATP = L-histidyl-tRNA(His) + AMP + diphosphate + H(+). The protein is Histidine--tRNA ligase of Lactobacillus delbrueckii subsp. bulgaricus (strain ATCC 11842 / DSM 20081 / BCRC 10696 / JCM 1002 / NBRC 13953 / NCIMB 11778 / NCTC 12712 / WDCM 00102 / Lb 14).